The following is a 557-amino-acid chain: CTP synthase (557 aa).

Positions 1-270 are amidoligase domain; that stretch reads MTKYVFVTGG…DAIICEELKL (270 aa). Ser-13 provides a ligand contact to CTP. Ser-13 serves as a coordination point for UTP. Residues 14 to 19 and Asp-71 each bind ATP; that span reads SLGKGI. Residues Asp-71 and Glu-144 each coordinate Mg(2+). CTP-binding positions include 151–153, 191–196, and Lys-227; these read DIE and KTKPTQ. UTP-binding positions include 191 to 196 and Lys-227; that span reads KTKPTQ. One can recognise a Glutamine amidotransferase type-1 domain in the interval 295–547; it reads TIGMVGKYVD…VEAALAHHEA (253 aa). L-glutamine is bound at residue Gly-356. Residue Cys-383 is the Nucleophile; for glutamine hydrolysis of the active site. L-glutamine is bound by residues 384 to 387, Glu-407, and Arg-473; that span reads LGMQ. Catalysis depends on residues His-520 and Glu-522.

The protein belongs to the CTP synthase family. Homotetramer.

It carries out the reaction UTP + L-glutamine + ATP + H2O = CTP + L-glutamate + ADP + phosphate + 2 H(+). The enzyme catalyses L-glutamine + H2O = L-glutamate + NH4(+). The catalysed reaction is UTP + NH4(+) + ATP = CTP + ADP + phosphate + 2 H(+). Its pathway is pyrimidine metabolism; CTP biosynthesis via de novo pathway; CTP from UDP: step 2/2. Allosterically activated by GTP, when glutamine is the substrate; GTP has no effect on the reaction when ammonia is the substrate. The allosteric effector GTP functions by stabilizing the protein conformation that binds the tetrahedral intermediate(s) formed during glutamine hydrolysis. Inhibited by the product CTP, via allosteric rather than competitive inhibition. Catalyzes the ATP-dependent amination of UTP to CTP with either L-glutamine or ammonia as the source of nitrogen. Regulates intracellular CTP levels through interactions with the four ribonucleotide triphosphates. The polypeptide is CTP synthase (Paraburkholderia phytofirmans (strain DSM 17436 / LMG 22146 / PsJN) (Burkholderia phytofirmans)).